The primary structure comprises 221 residues: Cytochrome c biogenesis ATP-binding export protein CcmA (221 aa).

The ABC transporter domain maps to 14-221; sequence LACHDVSCLR…FDLLDESHFS (208 aa). Position 46 to 53 (46 to 53) interacts with ATP; it reads GANGIGKS.

It belongs to the ABC transporter superfamily. CcmA exporter (TC 3.A.1.107) family. As to quaternary structure, the complex is composed of two ATP-binding proteins (CcmA) and two transmembrane proteins (CcmB).

It is found in the cell inner membrane. It carries out the reaction heme b(in) + ATP + H2O = heme b(out) + ADP + phosphate + H(+). Its function is as follows. Part of the ABC transporter complex CcmAB involved in the biogenesis of c-type cytochromes; once thought to export heme, this seems not to be the case, but its exact role is uncertain. Responsible for energy coupling to the transport system. The polypeptide is Cytochrome c biogenesis ATP-binding export protein CcmA (Zymomonas mobilis subsp. mobilis (strain ATCC 31821 / ZM4 / CP4)).